We begin with the raw amino-acid sequence, 470 residues long: BTB/POZ domain-containing protein 17 (470 aa).

The first 18 residues, 1–18, serve as a signal peptide directing secretion; that stretch reads MRMKGLYVVPLLLALVES. Residues 53–122 form the BTB domain; it reads SDTTLRIRTA…FYCGEISVNL (70 aa). One can recognise a BACK domain in the interval 161–261; that stretch reads VVSWYHYALR…ITPSQLFQIQ (101 aa).

Its subcellular location is the secreted. The polypeptide is BTB/POZ domain-containing protein 17 (btbd17) (Xenopus laevis (African clawed frog)).